Reading from the N-terminus, the 277-residue chain is AFSEECPYTVNDYSQENGPNIFALRKRFPLGMNDEDEEGKEALAIKDKLPGGLDEYQNQLYGICNETCTTCGPAAIDYVPADAPNGYAYGGSAHDGSHGNLRGHDNKGSEGYGYEAPYNPGFNGAPGSNGMQNYVPPHGAGYSAPYGVPHGAAHGSRYSSFSSVNKYGKHGDEKHHSSKKHEGNDGEGEKKKKSKKHKDHDGEKKKSKKHKDNEDAESVKSKKHKSHDCEKKKSKKHKDNEDAESVKSKKSVKEKGEKHNGKKPCSKKTNEEKKKKK.

Disordered regions lie at residues 95 to 114 and 162 to 277; these read DGSH…GYGY and SSVN…KKKK. 2 stretches are compositionally biased toward basic and acidic residues: residues 169–190 and 211–220; these read KHGD…EGEK and KDNEDAESVK. Residues 221–237 show a composition bias toward basic residues; the sequence is SKKHKSHDCEKKKSKKH. Composition is skewed to basic and acidic residues over residues 238-259 and 268-277; these read KDNE…GEKH and KTNEEKKKKK.

It localises to the secreted. In terms of biological role, KAHRP might mimick human histidine-rich glycoproteins to anchor host thrombospondin or a parasite analog in a binding complex with the endothelial cell receptor. The polypeptide is Knob-associated histidine-rich protein (Plasmodium falciparum (isolate CDC / Honduras)).